Consider the following 374-residue polypeptide: MEEFDYYEILEIERSASGEEIKKAYRKMAMKYHPDRNEGSSEAEEMFKRVNEAYQVLSDEGKRQLYDRYGKQGLESQGYSGFSGRGFEDVFDDLGSIFDSVFGGGFSSSSRKRSGPKYNLDLAMELDLSFKEAIFGCKKEIKIRYKDACPDCKGTGAKEGKIETCPDCGGRGQVFIRQGFMTFAQTCPKCGGSGERIKEKCPKCNGKGHENKEENLEVSIPEGVDTDNRIRVSRKGHVGKNGERGDLYLVVRVEEDEHFMRHGNDIYLHVPLFFSTVPLGTTLKIPSLRGELELKIPPNTKDKEQFVFKNEGVKDVHSAKKGNLIAQVKIVYPAKINDEQRELLEKLSRSFGVEGTPHEKGFEGVFEKIKGWFS.

Residues 5-70 (DYYEILEIER…GKRQLYDRYG (66 aa)) form the J domain. The CR-type zinc-finger motif lies at 136–213 (GCKKEIKIRY…CNGKGHENKE (78 aa)). Positions 149, 152, 165, 168, 187, 190, 201, and 204 each coordinate Zn(2+). CXXCXGXG motif repeat units lie at residues 149–156 (CPDCKGTG), 165–172 (CPDCGGRG), 187–194 (CPKCGGSG), and 201–208 (CPKCNGKG).

Belongs to the DnaJ family. As to quaternary structure, homodimer. The cofactor is Zn(2+).

It is found in the cytoplasm. Participates actively in the response to hyperosmotic and heat shock by preventing the aggregation of stress-denatured proteins and by disaggregating proteins, also in an autonomous, DnaK-independent fashion. Unfolded proteins bind initially to DnaJ; upon interaction with the DnaJ-bound protein, DnaK hydrolyzes its bound ATP, resulting in the formation of a stable complex. GrpE releases ADP from DnaK; ATP binding to DnaK triggers the release of the substrate protein, thus completing the reaction cycle. Several rounds of ATP-dependent interactions between DnaJ, DnaK and GrpE are required for fully efficient folding. Also involved, together with DnaK and GrpE, in the DNA replication of plasmids through activation of initiation proteins. The chain is Chaperone protein DnaJ from Wolinella succinogenes (strain ATCC 29543 / DSM 1740 / CCUG 13145 / JCM 31913 / LMG 7466 / NCTC 11488 / FDC 602W) (Vibrio succinogenes).